We begin with the raw amino-acid sequence, 298 residues long: Protease HtpX homolog (298 aa).

The next 2 membrane-spanning stretches (helical) occupy residues 14–34 (ILVMFGFFVLLALIGAAIGYL) and 39–59 (VIGGMIIAAIIAVIYMSVIIG). Histidine 144 lines the Zn(2+) pocket. Residue glutamate 145 is part of the active site. Zn(2+) is bound at residue histidine 148. Transmembrane regions (helical) follow at residues 159–179 (IALALASAIAMLVNFAGNFWW) and 195–215 (IFAILGSILLIILAPLAATIA). Glutamate 224 provides a ligand contact to Zn(2+).

It belongs to the peptidase M48B family. Zn(2+) is required as a cofactor.

Its subcellular location is the cell membrane. This Limosilactobacillus reuteri (strain DSM 20016) (Lactobacillus reuteri) protein is Protease HtpX homolog.